We begin with the raw amino-acid sequence, 162 residues long: UPF0305 protein MMP0665 (162 aa).

The protein belongs to the UPF0305 family.

The sequence is that of UPF0305 protein MMP0665 from Methanococcus maripaludis (strain DSM 14266 / JCM 13030 / NBRC 101832 / S2 / LL).